Reading from the N-terminus, the 267-residue chain is NAD kinase (267 aa).

Aspartate 45 (proton acceptor) is an active-site residue. NAD(+) is bound by residues 45-46, 121-122, lysine 147, aspartate 149, 160-165, and alanine 184; these read DG, NE, and TAYSKS.

The protein belongs to the NAD kinase family. Requires a divalent metal cation as cofactor.

Its subcellular location is the cytoplasm. It carries out the reaction NAD(+) + ATP = ADP + NADP(+) + H(+). Its function is as follows. Involved in the regulation of the intracellular balance of NAD and NADP, and is a key enzyme in the biosynthesis of NADP. Catalyzes specifically the phosphorylation on 2'-hydroxyl of the adenosine moiety of NAD to yield NADP. The chain is NAD kinase from Lactobacillus gasseri (strain ATCC 33323 / DSM 20243 / BCRC 14619 / CIP 102991 / JCM 1131 / KCTC 3163 / NCIMB 11718 / NCTC 13722 / AM63).